The sequence spans 340 residues: Phosphoribosylformylglycinamidine cyclo-ligase (340 aa).

The protein belongs to the AIR synthase family.

It is found in the cytoplasm. The enzyme catalyses 2-formamido-N(1)-(5-O-phospho-beta-D-ribosyl)acetamidine + ATP = 5-amino-1-(5-phospho-beta-D-ribosyl)imidazole + ADP + phosphate + H(+). It functions in the pathway purine metabolism; IMP biosynthesis via de novo pathway; 5-amino-1-(5-phospho-D-ribosyl)imidazole from N(2)-formyl-N(1)-(5-phospho-D-ribosyl)glycinamide: step 2/2. The polypeptide is Phosphoribosylformylglycinamidine cyclo-ligase (Macrococcus caseolyticus (strain JCSC5402) (Macrococcoides caseolyticum)).